The sequence spans 361 residues: Phosphoserine aminotransferase (361 aa).

R43 is an L-glutamate binding site. Pyridoxal 5'-phosphate is bound by residues A77–S78, W103, T152, D172, and Q195. K196 carries the N6-(pyridoxal phosphate)lysine modification. N237 to T238 is a pyridoxal 5'-phosphate binding site.

It belongs to the class-V pyridoxal-phosphate-dependent aminotransferase family. SerC subfamily. As to quaternary structure, homodimer. It depends on pyridoxal 5'-phosphate as a cofactor.

It localises to the cytoplasm. The catalysed reaction is O-phospho-L-serine + 2-oxoglutarate = 3-phosphooxypyruvate + L-glutamate. The enzyme catalyses 4-(phosphooxy)-L-threonine + 2-oxoglutarate = (R)-3-hydroxy-2-oxo-4-phosphooxybutanoate + L-glutamate. It functions in the pathway amino-acid biosynthesis; L-serine biosynthesis; L-serine from 3-phospho-D-glycerate: step 2/3. The protein operates within cofactor biosynthesis; pyridoxine 5'-phosphate biosynthesis; pyridoxine 5'-phosphate from D-erythrose 4-phosphate: step 3/5. Its function is as follows. Catalyzes the reversible conversion of 3-phosphohydroxypyruvate to phosphoserine and of 3-hydroxy-2-oxo-4-phosphonooxybutanoate to phosphohydroxythreonine. In Desulfosudis oleivorans (strain DSM 6200 / JCM 39069 / Hxd3) (Desulfococcus oleovorans), this protein is Phosphoserine aminotransferase.